The primary structure comprises 319 residues: Malate dehydrogenase (319 aa).

NAD(+) is bound by residues 10 to 15 and D34; that span reads GAGNIG. Substrate-binding residues include R83 and R89. Residues N96 and 119 to 121 contribute to the NAD(+) site; that span reads ITN. 2 residues coordinate substrate: N121 and R152. The Proton acceptor role is filled by H176.

It belongs to the LDH/MDH superfamily. MDH type 3 family.

The enzyme catalyses (S)-malate + NAD(+) = oxaloacetate + NADH + H(+). Functionally, catalyzes the reversible oxidation of malate to oxaloacetate. The sequence is that of Malate dehydrogenase from Francisella tularensis subsp. holarctica (strain FTNF002-00 / FTA).